The primary structure comprises 436 residues: 3-ketoacyl-CoA thiolase (436 aa).

C99 functions as the Acyl-thioester intermediate in the catalytic mechanism. Catalysis depends on proton acceptor residues H392 and C422.

Belongs to the thiolase-like superfamily. Thiolase family. As to quaternary structure, heterotetramer of two alpha chains (FadJ) and two beta chains (FadI).

It is found in the cytoplasm. It carries out the reaction an acyl-CoA + acetyl-CoA = a 3-oxoacyl-CoA + CoA. Its pathway is lipid metabolism; fatty acid beta-oxidation. Functionally, catalyzes the final step of fatty acid oxidation in which acetyl-CoA is released and the CoA ester of a fatty acid two carbons shorter is formed. The chain is 3-ketoacyl-CoA thiolase from Shigella flexneri serotype 5b (strain 8401).